The primary structure comprises 390 residues: Probable tRNA pseudouridine synthase D 2 (390 aa).

The active-site Nucleophile is the Asp93. The region spanning 166-353 is the TRUD domain; sequence YVLNYYGIQR…YGTRRKMVTP (188 aa).

Belongs to the pseudouridine synthase TruD family.

The catalysed reaction is uridine(13) in tRNA = pseudouridine(13) in tRNA. Could be responsible for synthesis of pseudouridine from uracil-13 in transfer RNAs. The sequence is that of Probable tRNA pseudouridine synthase D 2 from Methanococcus maripaludis (strain DSM 14266 / JCM 13030 / NBRC 101832 / S2 / LL).